Consider the following 255-residue polypeptide: Imidazole glycerol phosphate synthase subunit HisF (255 aa).

Active-site residues include aspartate 12 and aspartate 131.

This sequence belongs to the HisA/HisF family. Heterodimer of HisH and HisF.

It is found in the cytoplasm. It catalyses the reaction 5-[(5-phospho-1-deoxy-D-ribulos-1-ylimino)methylamino]-1-(5-phospho-beta-D-ribosyl)imidazole-4-carboxamide + L-glutamine = D-erythro-1-(imidazol-4-yl)glycerol 3-phosphate + 5-amino-1-(5-phospho-beta-D-ribosyl)imidazole-4-carboxamide + L-glutamate + H(+). It participates in amino-acid biosynthesis; L-histidine biosynthesis; L-histidine from 5-phospho-alpha-D-ribose 1-diphosphate: step 5/9. Functionally, IGPS catalyzes the conversion of PRFAR and glutamine to IGP, AICAR and glutamate. The HisF subunit catalyzes the cyclization activity that produces IGP and AICAR from PRFAR using the ammonia provided by the HisH subunit. The chain is Imidazole glycerol phosphate synthase subunit HisF from Neisseria meningitidis serogroup C (strain 053442).